We begin with the raw amino-acid sequence, 340 residues long: Protein RecA (340 aa).

74–81 (GPESSGKT) is an ATP binding site.

It belongs to the RecA family.

The protein resides in the cytoplasm. Functionally, can catalyze the hydrolysis of ATP in the presence of single-stranded DNA, the ATP-dependent uptake of single-stranded DNA by duplex DNA, and the ATP-dependent hybridization of homologous single-stranded DNAs. It interacts with LexA causing its activation and leading to its autocatalytic cleavage. The chain is Protein RecA from Porphyromonas gingivalis (strain ATCC 33277 / DSM 20709 / CIP 103683 / JCM 12257 / NCTC 11834 / 2561).